Reading from the N-terminus, the 349-residue chain is MTKQDLMDIIVKVAPGSPLREGVDYILDAGIGALIIIGYDDEVEKVRDGGFLIDCDYTPERIFELSKMDGAIILNDDCSKILYANVHVQPDNSYSTTESGTRHRTAERAAKHLKREVVAISERKKNVTLYKGNLKYRLKNFDELNIEVGQVLKTLESYRHVLNRSLDSLTILELDDLVTVLDVANTLQRFEMVRRISEEITRYLLELGSRGRLVNMQVSELIWDLDEEEESFLKDYIDDETDTDSVRRYLHSLSDSELLEVENVVVALGYSKSSSVFDNKIAAKGYRVLEKISKLTKKDVEKIVNTYKDISEIQEVTDEDFSAIKISKFKIKALRAGINRLKFTIEMQR.

In terms of domain architecture, DAC spans 3–143; sequence KQDLMDIIVK…LKYRLKNFDE (141 aa). ATP contacts are provided by residues G70, V88, and 101-105; that span reads TRHRT.

The protein belongs to the DisA family. In terms of assembly, homooctamer. Mg(2+) is required as a cofactor.

The catalysed reaction is 2 ATP = 3',3'-c-di-AMP + 2 diphosphate. Its function is as follows. Participates in a DNA-damage check-point. DisA forms globular foci that rapidly scan along the chromosomes searching for lesions. In terms of biological role, also has diadenylate cyclase activity, catalyzing the condensation of 2 ATP molecules into cyclic di-AMP (c-di-AMP). c-di-AMP likely acts as a signaling molecule that may couple DNA integrity with a cellular process. This is DNA integrity scanning protein DisA from Fusobacterium nucleatum subsp. nucleatum (strain ATCC 25586 / DSM 15643 / BCRC 10681 / CIP 101130 / JCM 8532 / KCTC 2640 / LMG 13131 / VPI 4355).